Reading from the N-terminus, the 212-residue chain is Large ribosomal subunit protein bL25 (212 aa).

Residues 1 to 25 (MSQSTIHKIAVKKRTETGKNENNRL) are disordered. Residues 13–24 (KRTETGKNENNR) show a composition bias toward basic and acidic residues.

Belongs to the bacterial ribosomal protein bL25 family. CTC subfamily. Part of the 50S ribosomal subunit; part of the 5S rRNA/L5/L18/L25 subcomplex. Contacts the 5S rRNA. Binds to the 5S rRNA independently of L5 and L18.

This is one of the proteins that binds to the 5S RNA in the ribosome where it forms part of the central protuberance. This is Large ribosomal subunit protein bL25 from Leptospira borgpetersenii serovar Hardjo-bovis (strain JB197).